The following is a 197-amino-acid chain: MQKIVLATGNPGKVRELANLLADFGLDVVAQTELGVESAEETGLTFIENAILKARHAAQTTGLPAIADDSGLAVDALGGAPGIYSARYAGTDASDQENLEKLLVALQNVPDEKRGAQFHCVLVYMRHAEDPTPLVFHGQWPGVIAHQPAGAAGFGYDPIFYVPALGKTAAELTREEKHAVSHRGQALKLMLDALRDA.

8-13 (TGNPGK) lines the substrate pocket. Mg(2+) is bound by residues E40 and D69. The active-site Proton acceptor is the D69. Residues S70, 154 to 157 (FGYD), K177, and 182 to 183 (HR) contribute to the substrate site.

Belongs to the HAM1 NTPase family. In terms of assembly, homodimer. It depends on Mg(2+) as a cofactor.

It carries out the reaction XTP + H2O = XMP + diphosphate + H(+). It catalyses the reaction dITP + H2O = dIMP + diphosphate + H(+). The catalysed reaction is ITP + H2O = IMP + diphosphate + H(+). Pyrophosphatase that catalyzes the hydrolysis of nucleoside triphosphates to their monophosphate derivatives, with a high preference for the non-canonical purine nucleotides XTP (xanthosine triphosphate), dITP (deoxyinosine triphosphate) and ITP. Seems to function as a house-cleaning enzyme that removes non-canonical purine nucleotides from the nucleotide pool, thus preventing their incorporation into DNA/RNA and avoiding chromosomal lesions. The protein is dITP/XTP pyrophosphatase of Yersinia pestis.